The primary structure comprises 214 residues: UPF0502 protein Pput_3252 (214 aa).

This sequence belongs to the UPF0502 family.

This chain is UPF0502 protein Pput_3252, found in Pseudomonas putida (strain ATCC 700007 / DSM 6899 / JCM 31910 / BCRC 17059 / LMG 24140 / F1).